Consider the following 562-residue polypeptide: NAD-dependent malic enzyme (562 aa).

The Proton donor role is filled by Tyr101. Position 154 (Arg154) interacts with NAD(+). The active-site Proton acceptor is Lys172. The a divalent metal cation site is built by Glu243, Asp244, and Asp267. NAD(+) is bound by residues Asp267 and Asn415.

Belongs to the malic enzymes family. Homotetramer. It depends on Mg(2+) as a cofactor. Mn(2+) is required as a cofactor.

It catalyses the reaction (S)-malate + NAD(+) = pyruvate + CO2 + NADH. The catalysed reaction is oxaloacetate + H(+) = pyruvate + CO2. The polypeptide is NAD-dependent malic enzyme (Shewanella pealeana (strain ATCC 700345 / ANG-SQ1)).